The primary structure comprises 668 residues: MHFAESVQTPPPSRPSDQSLNQHVLDLGSWDQGCRDLMLVNWLCVDFRQRLLNVLYTSCQKNFNEARSLARERLLDLVQRIASSDNLHGALYTPPSLDSRSSATPPQNLPPTPDLVQCIRGCDEPFPPLSLPTPAQIDTQENERLMCTPEDITYHDRDSQVVAQARRRSPPGTGPAVLPPIAFDNHELPPGCSDFLNFDLLSDGEVFSIGTHAGVTSDVCDSMPLDHDLSEMELDPPPDATTTTTTTTVSSPNVHSTHHLAIPNPEPGTPTPPSPLAGTSLTRKPPGTPDSPSAASQRRQRQRRAAAHATYRSTPSPCQSADTHIGAENEVAEPAPPSPSTRWTHSIPTHLPSPDTVLATFTHHLGRGKQSIALLLTRLFYAIGSPDALSQLRDAVKLSREQTPAIIPVSSTNDLATTVKALDHLDSMTTLSHILRRYYLVRLLEHRTRFEQDHVTAKQAWRPPKRMLKYDCARVELIKNGGNCSSSSCSSSASKKNEEKREPPLKYRSKSQALADLMQMLYPDLKPAVAEGKDCVYSRKLTKLRNRLSCARNWYRFEQAFPGAILALIPCAGRFSVSIDQIEKLPSDTVQIFLDYLQEHRGVFSRCVSQTLGTGIFSVLARTSADAAPTFAFEKVEEEGFGDLLYDTDELVSLSIEYDRYCDLNSNA.

Disordered regions lie at residues 1–20 (MHFA…DQSL), 92–113 (YTPP…PPTP), 224–322 (PLDH…QSAD), 330–349 (EVAE…SIPT), and 483–506 (NCSS…PPLK). Residues 96-106 (SLDSRSSATPP) show a composition bias toward polar residues. Pro residues predominate over residues 264 to 275 (NPEPGTPTPPSP). The span at 311–322 (YRSTPSPCQSAD) shows a compositional bias: polar residues. The segment covering 484–494 (CSSSSCSSSAS) has biased composition (low complexity). Residues 495 to 505 (KKNEEKREPPL) show a composition bias toward basic and acidic residues.

The protein operates within antifungal biosynthesis. Its function is as follows. Part of the gene cluster that mediates the biosynthesis of echinocandin B, a fungal lipidated cyclic hexapeptide that acts as an antifungal agent. Linoleoyl-AMP, produced by the fatty-acyl-AMP ligase ecdI, is transferred to the initiation carrier domain (T0) of ecdA. The linoleoyl-S-phosphopantetheinyl-T0 is sequentially extended with L-ornithine, L-threonine, L-proline, L-homotyrosine, L-threonine, and 4R-methyl-L-proline to form the linear hexapeptide. Thereafter, the terminal condensation (C7) performs macrocyclization of the NRPS product and the cyclic scaffold is released from ecdA. All six of the amino acid residues are hydroxylated, including 4R,5R-dihydroxy-L-ornithine, 4R-hydroxyl-L-proline, 3S,4S-dihydroxy-L-homotyrosine, and 3S-hydroxyl-4S-methyl-L-prolin. In the pathway, all the hydroxylation reactions are proposed to occur following completion of the cyclic peptide, so the unhydroxylated precursor produced by ecdA will undergo six rounds of hydroxylation. Five hydroxylase genes (ecdG, ecdH, ecdK, htyE and htyF) are embedded within the echinocandin B (ecd) and L-homotyrosine (hty) clusters. This chain is Echinocandin B biosynthetic cluster protein J, found in Aspergillus rugulosus (Emericella rugulosa).